Consider the following 1178-residue polypeptide: Thrombospondin-2 (1178 aa).

An N-terminal signal peptide occupies residues 1–22; it reads MLQRSRLLWLAVFITLWVSSDA. One can recognise a Laminin G-like domain in the interval 25 to 221; it reads DAKEEENTFD…LQNIHLIFDT (197 aa). 4 N-linked (GlcNAc...) asparagine glycosylation sites follow: N157, N244, N317, and N322. One can recognise a VWFC domain in the interval 324–381; sequence SVCWQDGRVFADSESWIVDSCTKCTCQDSKIVCHQITCPPVSCADPSFIEGECCPVCS. 3 consecutive TSP type-1 domains span residues 387-437, 443-498, and 500-555; these read EEGW…KKCD, DGGW…APCP, and NGQW…RDCP. 27 cysteine pairs are disulfide-bonded: C399–C431, C403–C436, C414–C421, C455–C492, C459–C497, C470–C482, C512–C549, C516–C554, C527–C539, C559–C570, C564–C580, C583–C594, C600–C616, C607–C625, C628–C652, C658–C671, C665–C684, C686–C697, C713–C721, C726–C746, C762–C782, C785–C805, C821–C841, C844–C864, C882–C902, C918–C938, and C954–C1175. The N-linked (GlcNAc...) asparagine glycan is linked to N463. The region spanning 555 to 595 is the EGF-like 1 domain; the sequence is PIDGCLSNPCFPGAECNSYPDGSWSCGPCPAGFLGNGTVCE. Residue N590 is glycosylated (N-linked (GlcNAc...) asparagine). An EGF-like 2 domain is found at 654 to 698; the sequence is PENPCKDKTHSCHKSAECIYLGHFSDPMYKCECRTGYAGDGRICG. 8 TSP type-3 repeats span residues 699–734, 735–770, 771–793, 794–829, 830–852, 853–890, 891–926, and 927–962; these read EDSD…NSGQ, EDFD…NPRQ, FDYD…NPAQ, IDTD…NTDQ, SDTD…NPDQ, TDAD…NANQ, ADHD…NPEQ, and EDSD…AISE. An N-linked (GlcNAc...) asparagine glycan is attached at N716. A disordered region spans residues 737-760; it reads FDKDGKGDACDEDDDNDGVEDDKD. The span at 746 to 759 shows a compositional bias: acidic residues; it reads CDEDDDNDGVEDDK. Residues 852 to 941 are disordered; it reads QTDADNDLVG…DGRGDICKDD (90 aa). Acidic residues predominate over residues 853 to 872; that stretch reads TDADNDLVGDQCDNNEDIDE. Basic and acidic residues predominate over residues 891-901; the sequence is ADHDKDGKGDA. A compositionally biased stretch (acidic residues) spans 902–911; it reads CDPDDDNDGI. Composition is skewed to basic and acidic residues over residues 912 to 924 and 931 to 940; these read PDDR…RYNP and GDGRGDICKD. The Cell attachment site signature appears at 934-936; it reads RGD. The region spanning 966-1178 is the TSP C-terminal domain; sequence RKFQMVPLDP…SDLKYECRDA (213 aa). N1075 is a glycosylation site (N-linked (GlcNAc...) asparagine).

This sequence belongs to the thrombospondin family. As to quaternary structure, homotrimer; disulfide-linked. Can bind to fibrinogen, fibronectin, laminin and type V collagen.

Adhesive glycoprotein that mediates cell-to-cell and cell-to-matrix interactions. The polypeptide is Thrombospondin-2 (THBS2) (Gallus gallus (Chicken)).